The chain runs to 30 residues: Cyclotide cter-P (30 aa).

Positions 1–30 (GIPCGESCVFIPCITAAIGCSCKSKVCYRN) form a cross-link, cyclopeptide (Gly-Asn). Cystine bridges form between C4–C20, C8–C22, and C13–C27.

In terms of processing, this is a cyclic peptide.

The protein resides in the secreted. Functionally, probably participates in a plant defense mechanism. The protein is Cyclotide cter-P of Clitoria ternatea (Butterfly pea).